Reading from the N-terminus, the 379-residue chain is Retinoic acid receptor RXR-alpha-B (379 aa).

The span at 1 to 22 (MPVPEQKQTVQLSSPMNAVSSS) shows a compositional bias: polar residues. A disordered region spans residues 1–24 (MPVPEQKQTVQLSSPMNAVSSSED). The tract at residues 1–53 (MPVPEQKQTVQLSSPMNAVSSSEDIKPPLGLNGVMKVPAHRIGTLSLSLTKHI) is modulating. The nuclear receptor DNA-binding region spans 51 to 126 (KHICAICGDR…MGMKREAVQE (76 aa)). Zn(2+) is bound by residues cysteine 54, cysteine 57, cysteine 71, and cysteine 74. The NR C4-type zinc-finger motif lies at 54 to 74 (CAICGDRSSGKHYGVYSCEGC). The segment at 79–84 (KRTVRK) is nuclear localization signal. Zn(2+) is bound by residues cysteine 90, cysteine 96, cysteine 106, and cysteine 109. The NR C4-type zinc finger occupies 90 to 109 (CRDNKDCMIDKRQRNRCQYC). The segment at 120-141 (KREAVQEERQRAKERSEAEFGG) is hinge. The NR LBD domain maps to 144–375 (NEDMPVEKIL…TFLMEMLEAP (232 aa)). 9-cis-retinoate-binding residues include arginine 233 and alanine 244. The all-trans-retinoate site is built by arginine 233 and alanine 244. A required for nuclear export region spans residues 265–285 (RVLTELVSKMRDMQMDKTELG). The segment at 364 to 375 (IDTFLMEMLEAP) is AF-2.

The protein belongs to the nuclear hormone receptor family. NR2 subfamily. As to quaternary structure, homodimer. Heterodimer; with a rar molecule. Binds DNA preferentially as a rar/rxr heterodimer. Uniform expression from the blastula to mid-gastrula stages. At 12 hours post-fertilization (hpf), expressed strongly in the tail and weakly elsewhere. At 24 hpf, weak expression in the forebrain, eyes and pharyngeal endoderm and continued expression in the tail mesoderm. At 48 hpf, anterior expression limited to ventral cells underlying the head, medial expression in the pectoral fin bud mesoderm and continued tail expression.

Its subcellular location is the nucleus. In terms of biological role, receptor for retinoic acid that acts as a transcription factor. Forms homo- or heterodimers with retinoic acid receptors (rars) and binds to target response elements in response to their ligands, all-trans or 9-cis retinoic acid, to regulate gene expression in various biological processes. The rar/rxr heterodimers bind to the retinoic acid response elements (RARE) composed of tandem 5'-AGGTCA-3' sites known as DR1-DR5 to regulate transcription. The high affinity ligand for rxrs is 9-cis retinoic acid. In the absence of ligand, the rar/rxr heterodimers associate with a multiprotein complex containing transcription corepressors that induce histone deacetylation, chromatin condensation and transcriptional suppression. On ligand binding, the corepressors dissociate from the receptors and coactivators are recruited leading to transcriptional activation. In Danio rerio (Zebrafish), this protein is Retinoic acid receptor RXR-alpha-B (rxrab).